The sequence spans 301 residues: Methionyl-tRNA formyltransferase (301 aa).

109-112 (SILP) contributes to the (6S)-5,6,7,8-tetrahydrofolate binding site.

The protein belongs to the Fmt family.

The catalysed reaction is L-methionyl-tRNA(fMet) + (6R)-10-formyltetrahydrofolate = N-formyl-L-methionyl-tRNA(fMet) + (6S)-5,6,7,8-tetrahydrofolate + H(+). Attaches a formyl group to the free amino group of methionyl-tRNA(fMet). The formyl group appears to play a dual role in the initiator identity of N-formylmethionyl-tRNA by promoting its recognition by IF2 and preventing the misappropriation of this tRNA by the elongation apparatus. In Campylobacter curvus (strain 525.92), this protein is Methionyl-tRNA formyltransferase.